The chain runs to 243 residues: Linker for activation of T-cells family member 2 (243 aa).

At Met-1 to Thr-5 the chain is on the extracellular side. Residues Glu-6 to Val-26 form a helical; Signal-anchor for type III membrane protein membrane-spanning segment. S-palmitoyl cysteine attachment occurs at residues Cys-25 and Cys-28. At Arg-27–Ala-243 the chain is on the cytoplasmic side. Ser-44 bears the Phosphoserine mark. A Phosphotyrosine modification is found at Tyr-58. Ser-59 and Ser-92 each carry phosphoserine. Phosphotyrosine is present on residues Tyr-136, Tyr-193, and Tyr-233. Positions Pro-174–Ala-243 are disordered.

When phosphorylated, interacts with GRB2. May also interact with SOS1, GAB1 and CBL. Post-translationally, phosphorylated on tyrosines following cross-linking of BCR in B-cells, FCGR1 in myeloid cells, or FCER1 in mast cells; which induces the recruitment of GRB2. May be polyubiquitinated. As to expression, highly expressed in spleen, peripheral blood lymphocytes, and germinal centers of lymph nodes. Also expressed in placenta, lung, pancreas and small intestine. Present in B-cells, NK cells and monocytes. Absent from T-cells (at protein level).

Its subcellular location is the cell membrane. Its function is as follows. Involved in FCER1 (high affinity immunoglobulin epsilon receptor)-mediated signaling in mast cells. May also be involved in BCR (B-cell antigen receptor)-mediated signaling in B-cells and FCGR1 (high affinity immunoglobulin gamma Fc receptor I)-mediated signaling in myeloid cells. Couples activation of these receptors and their associated kinases with distal intracellular events through the recruitment of GRB2. The protein is Linker for activation of T-cells family member 2 (LAT2) of Homo sapiens (Human).